Here is a 262-residue protein sequence, read N- to C-terminus: Type III pantothenate kinase (262 aa).

Residue 9–16 participates in ATP binding; that stretch reads DIGNTNVK. Residues Y103 and 110 to 113 contribute to the substrate site; that span reads GADR. D112 serves as the catalytic Proton acceptor. D134 lines the K(+) pocket. Position 137 (T137) interacts with ATP. Residue T190 coordinates substrate.

It belongs to the type III pantothenate kinase family. Homodimer. NH4(+) is required as a cofactor. It depends on K(+) as a cofactor.

It localises to the cytoplasm. It catalyses the reaction (R)-pantothenate + ATP = (R)-4'-phosphopantothenate + ADP + H(+). It functions in the pathway cofactor biosynthesis; coenzyme A biosynthesis; CoA from (R)-pantothenate: step 1/5. Functionally, catalyzes the phosphorylation of pantothenate (Pan), the first step in CoA biosynthesis. The polypeptide is Type III pantothenate kinase (Nitratidesulfovibrio vulgaris (strain ATCC 29579 / DSM 644 / CCUG 34227 / NCIMB 8303 / VKM B-1760 / Hildenborough) (Desulfovibrio vulgaris)).